The chain runs to 327 residues: Malate dehydrogenase 1 (327 aa).

NAD(+) is bound at residue 12-18 (GAAGQIA). 2 residues coordinate substrate: Arg-93 and Arg-99. NAD(+) is bound by residues Asn-106, Gln-113, and 130–132 (VGN). 2 residues coordinate substrate: Asn-132 and Arg-163. Residue His-188 is the Proton acceptor of the active site.

The protein belongs to the LDH/MDH superfamily. MDH type 2 family.

The enzyme catalyses (S)-malate + NAD(+) = oxaloacetate + NADH + H(+). Functionally, catalyzes the reversible oxidation of malate to oxaloacetate. This Burkholderia thailandensis (strain ATCC 700388 / DSM 13276 / CCUG 48851 / CIP 106301 / E264) protein is Malate dehydrogenase 1.